Here is a 457-residue protein sequence, read N- to C-terminus: Solute carrier family 38 member 6 (457 aa).

The residue at position 1 (methionine 1) is an N-acetylmethionine. Residues serine 4 and serine 7 each carry the phosphoserine modification. The next 5 membrane-spanning stretches (helical) occupy residues 48–68 (FGLS…LGLA), 70–90 (VMAN…ALLA), 112–132 (LGLF…IIIQ), 171–191 (LLII…KIGF), and 192–212 (LGYT…VVVI). An intrachain disulfide couples cysteine 219 to cysteine 239. Asparagine 234 is a glycosylation site (N-linked (GlcNAc...) asparagine). A helical membrane pass occupies residues 251–271 (VYAIPTMAFSFLCHTSVLPIY). A glycan (N-linked (GlcNAc...) asparagine) is linked at asparagine 284. 5 helical membrane passes run 289–309 (AIAL…LTFY), 328–348 (AAVM…VPLI), 372–392 (SLTT…VPDI), 395–415 (VFGV…PGLF), and 432–452 (ALSL…LIIL).

Belongs to the amino acid/polyamine transporter 2 family.

The protein resides in the cell membrane. It localises to the synapse. The enzyme catalyses L-glutamine(out) = L-glutamine(in). It carries out the reaction L-glutamate(out) = L-glutamate(in). Its function is as follows. Amino acid transporter with an apparent selectivity for L-glutamine and L-glutamate. May facilitate glutamine uptake in excitatory neurons. The transport mechanism remains to be elucidated. The polypeptide is Solute carrier family 38 member 6 (Rattus norvegicus (Rat)).